A 1103-amino-acid chain; its full sequence is Isoleucine--tRNA ligase (1103 aa).

The interval 1 to 25 (MSENVYPKANEGGETAHVAPNPSFP) is disordered. Residues 65 to 75 (PFANGLPHYGH) carry the 'HIGH' region motif. The short motif at 649–653 (KMSKH) is the 'KMSKS' region element. An ATP-binding site is contributed by Lys-652.

This sequence belongs to the class-I aminoacyl-tRNA synthetase family. IleS type 2 subfamily. In terms of assembly, monomer. Zn(2+) is required as a cofactor.

It is found in the cytoplasm. The catalysed reaction is tRNA(Ile) + L-isoleucine + ATP = L-isoleucyl-tRNA(Ile) + AMP + diphosphate. Its function is as follows. Catalyzes the attachment of isoleucine to tRNA(Ile). As IleRS can inadvertently accommodate and process structurally similar amino acids such as valine, to avoid such errors it has two additional distinct tRNA(Ile)-dependent editing activities. One activity is designated as 'pretransfer' editing and involves the hydrolysis of activated Val-AMP. The other activity is designated 'posttransfer' editing and involves deacylation of mischarged Val-tRNA(Ile). The polypeptide is Isoleucine--tRNA ligase (Bifidobacterium longum (strain NCC 2705)).